Here is a 133-residue protein sequence, read N- to C-terminus: MNAPVWWQQLLLAMTGGALGSGLRFAIGASLIQRFGTGFPWGTLTVNLLGSFVAGVLLVWLDARGPSSWPLRALLIVGVIGGLTTFSSLMMECLVFARTDRSTMIGIYLAVTLLAGLALVVAGARTGQWLVAR.

Helical transmembrane passes span 12 to 32 (LAMTGGALGSGLRFAIGASLI), 41 to 61 (WGTLTVNLLGSFVAGVLLVWL), 76 to 96 (IVGVIGGLTTFSSLMMECLVF), and 104 to 124 (MIGIYLAVTLLAGLALVVAGA). Na(+) contacts are provided by G81 and T84.

The protein belongs to the fluoride channel Fluc/FEX (TC 1.A.43) family.

It is found in the cell inner membrane. The catalysed reaction is fluoride(in) = fluoride(out). With respect to regulation, na(+) is not transported, but it plays an essential structural role and its presence is essential for fluoride channel function. Its function is as follows. Fluoride-specific ion channel. Important for reducing fluoride concentration in the cell, thus reducing its toxicity. This chain is Fluoride-specific ion channel FluC, found in Xanthomonas euvesicatoria pv. vesicatoria (strain 85-10) (Xanthomonas campestris pv. vesicatoria).